The primary structure comprises 347 residues: Protein RecA (347 aa).

67 to 74 provides a ligand contact to ATP; it reads GPESSGKT.

It belongs to the RecA family.

Its subcellular location is the cytoplasm. In terms of biological role, can catalyze the hydrolysis of ATP in the presence of single-stranded DNA, the ATP-dependent uptake of single-stranded DNA by duplex DNA, and the ATP-dependent hybridization of homologous single-stranded DNAs. It interacts with LexA causing its activation and leading to its autocatalytic cleavage. This Sulfurovum sp. (strain NBC37-1) protein is Protein RecA.